A 95-amino-acid polypeptide reads, in one-letter code: Selenoprotein K (95 aa).

The helical transmembrane segment at L20–L42 threads the bilayer. The disordered stretch occupies residues K47 to R95. U93 is a non-standard amino acid (selenocysteine).

The protein belongs to the selenoprotein K family. Interacts with DERL1, DERL2, DERL3 and SELENOS. The SELENOK-SELENOS complex interacts with VCP. Interacts with ZDHHC6. In terms of processing, cleaved by CAPN2/m-calpain in resting macrophages but not in activated macrophages. Macrophage activation up-regulates expression of the calpain inhibitor CAST/calpastatin, resulting in inhibition of CAPN2 activity. Post-translationally, truncated SELENOK proteins produced by failed UGA/Sec decoding are ubiquitinated by the CRL2(KLHDC2) complex, which recognizes the diglycine (Gly-Gly) at the C-terminus of truncated SELENOK proteins.

The protein resides in the endoplasmic reticulum membrane. The protein localises to the cell membrane. Functionally, required for Ca(2+) flux in immune cells and plays a role in T-cell proliferation and in T-cell and neutrophil migration. Involved in endoplasmic reticulum-associated degradation (ERAD) of soluble glycosylated proteins. Required for palmitoylation and cell surface expression of CD36 and involved in macrophage uptake of low-density lipoprotein and in foam cell formation. Together with ZDHHC6, required for palmitoylation of ITPR1 in immune cells, leading to regulate ITPR1 stability and function. Plays a role in protection of cells from ER stress-induced apoptosis. Protects cells from oxidative stress when overexpressed in cardiomyocytes. The protein is Selenoprotein K of Bos taurus (Bovine).